A 102-amino-acid polypeptide reads, in one-letter code: Putative ubiquitin-like protein FUBI-like protein ENSP00000310146 (102 aa).

The region spanning 23–99 (LCPQVAYVRA…LEVVGRRLGV (77 aa)) is the Ubiquitin-like domain.

In Homo sapiens (Human), this protein is Putative ubiquitin-like protein FUBI-like protein ENSP00000310146.